The primary structure comprises 342 residues: Phosphate acyltransferase (342 aa).

The protein belongs to the PlsX family. Homodimer. Probably interacts with PlsY.

It is found in the cytoplasm. It catalyses the reaction a fatty acyl-[ACP] + phosphate = an acyl phosphate + holo-[ACP]. The protein operates within lipid metabolism; phospholipid metabolism. In terms of biological role, catalyzes the reversible formation of acyl-phosphate (acyl-PO(4)) from acyl-[acyl-carrier-protein] (acyl-ACP). This enzyme utilizes acyl-ACP as fatty acyl donor, but not acyl-CoA. This chain is Phosphate acyltransferase, found in Shewanella pealeana (strain ATCC 700345 / ANG-SQ1).